The following is a 205-amino-acid chain: Small ribosomal subunit protein uS4 (205 aa).

A disordered region spans residues 19 to 45; the sequence is IWGRSKSPVNRREYGPGQHGQRRKGKL. The S4 RNA-binding domain occupies 94–157; the sequence is RRLDAVVYRA…KQMALVLEAV (64 aa).

This sequence belongs to the universal ribosomal protein uS4 family. Part of the 30S ribosomal subunit. Contacts protein S5. The interaction surface between S4 and S5 is involved in control of translational fidelity.

In terms of biological role, one of the primary rRNA binding proteins, it binds directly to 16S rRNA where it nucleates assembly of the body of the 30S subunit. Its function is as follows. With S5 and S12 plays an important role in translational accuracy. In Azorhizobium caulinodans (strain ATCC 43989 / DSM 5975 / JCM 20966 / LMG 6465 / NBRC 14845 / NCIMB 13405 / ORS 571), this protein is Small ribosomal subunit protein uS4.